A 91-amino-acid polypeptide reads, in one-letter code: HssA/B-like protein 24 (91 aa).

This sequence belongs to the hssA/B family.

The chain is HssA/B-like protein 24 (hssl24) from Dictyostelium discoideum (Social amoeba).